The following is a 323-amino-acid chain: tRNA dimethylallyltransferase (323 aa).

12–19 serves as a coordination point for ATP; it reads GPTAAGKT. 14 to 19 is a substrate binding site; the sequence is TAAGKT. Interaction with substrate tRNA regions lie at residues 37–40 and 161–165; these read DSAL and QRLMR.

Belongs to the IPP transferase family. As to quaternary structure, monomer. Mg(2+) is required as a cofactor.

It catalyses the reaction adenosine(37) in tRNA + dimethylallyl diphosphate = N(6)-dimethylallyladenosine(37) in tRNA + diphosphate. In terms of biological role, catalyzes the transfer of a dimethylallyl group onto the adenine at position 37 in tRNAs that read codons beginning with uridine, leading to the formation of N6-(dimethylallyl)adenosine (i(6)A). This chain is tRNA dimethylallyltransferase, found in Pseudomonas aeruginosa (strain UCBPP-PA14).